Here is a 499-residue protein sequence, read N- to C-terminus: Rhamnogalacturonan I rhamnosyltransferase 1 (499 aa).

A helical; Signal-anchor for type II membrane protein membrane pass occupies residues 31–50 (WFVRVCSSILVWTCLVQLFA). Asn88, Asn121, and Asn207 each carry an N-linked (GlcNAc...) asparagine glycan. 261 to 263 (HLR) is a substrate binding site. N-linked (GlcNAc...) asparagine glycosylation is found at Asn375, Asn435, and Asn496.

The protein belongs to the glycosyltransferase GT106 family.

The protein resides in the golgi apparatus membrane. The catalysed reaction is alpha-D-galacturonosyl-[(1-&gt;2)-alpha-L-rhamnosyl-(1-&gt;4)-alpha-D-galacturonosyl](n) + UDP-beta-L-rhamnose = [(1-&gt;2)-alpha-L-rhamnosyl-(1-&gt;4)-alpha-D-galacturonosyl](n+1) + UDP + H(+). The protein operates within glycan metabolism; pectin biosynthesis. In terms of biological role, glycosyltransferase involved in the formation of rhamnogalacturonan I (RG-I) oligosaccharides in the seed coat mucilage, which is a specialized cell wall with abundant RG-I. Transfers the rhamnose residue from UDP-beta-L-rhamnose to RG-I oligosaccharides. This Arabidopsis thaliana (Mouse-ear cress) protein is Rhamnogalacturonan I rhamnosyltransferase 1.